The sequence spans 718 residues: Heat shock 70 kDa protein 7, chloroplastic (718 aa).

The transit peptide at 1-92 directs the protein to the chloroplast; the sequence is MASSAAQIHI…IDLGTTNSAV (92 aa). The segment covering 668–678 has biased composition (polar residues); the sequence is QIGQSLYNQPQ. The segment at 668–718 is disordered; the sequence is QIGQSLYNQPQPGGADSPPGGEASSSSDTSSSAKGGDNGGDVIDADFTDSN.

Belongs to the heat shock protein 70 (TC 1.A.33) family. DnaK subfamily.

It localises to the plastid. It is found in the chloroplast stroma. Its function is as follows. Acts redundantly with HSP70-6 in the thermotolerance of germinating seeds. Plays an important role in the protein precursor import into chloroplasts. In terms of biological role, in cooperation with other chaperones, Hsp70s are key components that facilitate folding of de novo synthesized proteins, assist translocation of precursor proteins into organelles, and are responsible for degradation of damaged protein under stress conditions. This Arabidopsis thaliana (Mouse-ear cress) protein is Heat shock 70 kDa protein 7, chloroplastic (HSP70-7).